The chain runs to 180 residues: Large ribosomal subunit protein eL18 (180 aa).

The interval 152–180 (FGPAPGVPGSHTKPYVISKSRERTNAHRA) is disordered. The span at 170–180 (KSRERTNAHRA) shows a compositional bias: basic and acidic residues.

This sequence belongs to the eukaryotic ribosomal protein eL18 family.

The protein resides in the cytoplasm. This chain is Large ribosomal subunit protein eL18 (RPL18), found in Taenia asiatica (Asian tapeworm).